The primary structure comprises 61 residues: Large ribosomal subunit protein uL29 (61 aa).

This sequence belongs to the universal ribosomal protein uL29 family.

This chain is Large ribosomal subunit protein uL29, found in Campylobacter curvus (strain 525.92).